Consider the following 364-residue polypeptide: Growth hormone secretagogue receptor type 1 (364 aa).

Topologically, residues 1–40 are extracellular; it reads MWNATPSEEPEPNVTLDLDWDASPGNDSLSDELLPLFPAP. N-linked (GlcNAc...) asparagine glycans are attached at residues Asn-13 and Asn-26. The helical transmembrane segment at 41–66 threads the bilayer; it reads LLAGVTATCVALFVVGISGNLLTMLV. The Cytoplasmic segment spans residues 67 to 72; it reads VSRFRE. A helical transmembrane segment spans residues 73-96; sequence LRTTTNLYLSSMAFSDLLIFLCMP. Residues 97–117 are Extracellular-facing; sequence LDLVRLWQYRPWNFGDLLCKL. A disulfide bridge connects residues Cys-115 and Cys-197. Residues 118-139 form a helical membrane-spanning segment; that stretch reads FQFVSESCTYATVLTITALSVE. Residues 140–162 are Cytoplasmic-facing; sequence RYFAICFPLRAKVVVTKGRVKLV. Residues 163 to 183 traverse the membrane as a helical segment; it reads ILVIWAVAFCSAGPIFVLVGV. At 184–211 the chain is on the extracellular side; sequence EHENGTDPRDTNECRATEFAVRSGLLTV. Asn-187 carries N-linked (GlcNAc...) asparagine glycosylation. A helical transmembrane segment spans residues 212–235; that stretch reads MVWVSSVFFFLPVFCLTVLYSLIG. Residues 236–263 lie on the Cytoplasmic side of the membrane; that stretch reads RKLWRRRGDAAVGSSLRDQNHKQTVKML. Residues 264–285 traverse the membrane as a helical segment; the sequence is AVVVFAFILCWLPFHVGRYLFS. Residues 286-302 are Extracellular-facing; it reads KSFEPGSLEIAQISQYC. A helical transmembrane segment spans residues 303–326; that stretch reads NLVSFVLFYLSAAINPILYNIMSK. Residues 327–364 are Cytoplasmic-facing; sequence KYRVAVFKLLGFESFSQRKLSTLKDESSRAWTKSSINT.

The protein belongs to the G-protein coupled receptor 1 family.

Its subcellular location is the cell membrane. In terms of biological role, receptor for ghrelin, coupled to G-alpha-11 proteins. Stimulates growth hormone secretion. Also binds other growth hormone releasing peptides (GHRP) (e.g. Met-enkephalin and GHRP-6) as well as non-peptide, low molecular weight secretagogues (e.g. L-692,429, MK-0677, adenosine). The protein is Growth hormone secretagogue receptor type 1 (Ghsr) of Mus musculus (Mouse).